A 248-amino-acid polypeptide reads, in one-letter code: Putative TrmH family tRNA/rRNA methyltransferase (248 aa).

S-adenosyl-L-methionine contacts are provided by G196, I216, and L225.

Belongs to the class IV-like SAM-binding methyltransferase superfamily. RNA methyltransferase TrmH family.

The protein is Putative TrmH family tRNA/rRNA methyltransferase of Staphylococcus aureus (strain COL).